Here is a 144-residue protein sequence, read N- to C-terminus: Large ribosomal subunit protein uL15 (144 aa).

The segment covering 1-12 (MRLNTLSPSLGS) has biased composition (polar residues). The interval 1 to 51 (MRLNTLSPSLGSRKNHKRLGRGIGSGFGKTAGRGHKGQKSRSGGHVNRGFE) is disordered. Residues 21–31 (RGIGSGFGKTA) are compositionally biased toward gly residues.

The protein belongs to the universal ribosomal protein uL15 family. Part of the 50S ribosomal subunit.

Its function is as follows. Binds to the 23S rRNA. The protein is Large ribosomal subunit protein uL15 of Buchnera aphidicola subsp. Schizaphis graminum (strain Sg).